The sequence spans 417 residues: uncharacterized protein (417 aa).

Disordered regions lie at residues phenylalanine 44 to arginine 83 and valine 325 to glutamate 346. Positions serine 54 to serine 64 are enriched in low complexity. Residues alanine 65–asparagine 76 show a composition bias toward polar residues. Residues glutamine 326–arginine 339 are compositionally biased toward basic residues. A helical transmembrane segment spans residues phenylalanine 362–valine 382.

It localises to the membrane. This is an uncharacterized protein from Caenorhabditis elegans.